The primary structure comprises 162 residues: Lipoprotein signal peptidase (162 aa).

Transmembrane regions (helical) follow at residues 12–32 (WLWL…LILQ), 70–90 (WFFA…MYRS), and 102–122 (ALII…GFVV). Catalysis depends on residues aspartate 123 and aspartate 141. The helical transmembrane segment at 137–157 (FNLADSAICIGAALIVLEGFL) threads the bilayer.

The protein belongs to the peptidase A8 family.

It is found in the cell inner membrane. It catalyses the reaction Release of signal peptides from bacterial membrane prolipoproteins. Hydrolyzes -Xaa-Yaa-Zaa-|-(S,diacylglyceryl)Cys-, in which Xaa is hydrophobic (preferably Leu), and Yaa (Ala or Ser) and Zaa (Gly or Ala) have small, neutral side chains.. It functions in the pathway protein modification; lipoprotein biosynthesis (signal peptide cleavage). Its function is as follows. This protein specifically catalyzes the removal of signal peptides from prolipoproteins. The protein is Lipoprotein signal peptidase of Citrobacter koseri (strain ATCC BAA-895 / CDC 4225-83 / SGSC4696).